The following is a 304-amino-acid chain: MTTLRIATRKSPLALWQSEHVAAALRQHHPGLEVVLVPMSTRGDEVLDRSLAAIGGKGLFLKELELAMLRGDADCAVHSFKDVPMELDDPFVLPAILERGDPADALVSNLYASLQALPLGARVGTSSLRRQAQLRAARPDLELIDLRGNVNTRLAKLDNGGYDAIVLACAGLQRLGLDERISARLDAPEWLPAPAQGAVAVECRGDDARIHSLLAVLDAGRTRACVEAERAMNRALHGSCHVPVAALARWEGEGLFLQGMVGSASDGRLIHADAHGSADDTEDLGRRVAQGLFDKGAAQLLAAL.

Cysteine 240 bears the S-(dipyrrolylmethanemethyl)cysteine mark.

Belongs to the HMBS family. In terms of assembly, monomer. Dipyrromethane is required as a cofactor.

The enzyme catalyses 4 porphobilinogen + H2O = hydroxymethylbilane + 4 NH4(+). The protein operates within porphyrin-containing compound metabolism; protoporphyrin-IX biosynthesis; coproporphyrinogen-III from 5-aminolevulinate: step 2/4. Functionally, tetrapolymerization of the monopyrrole PBG into the hydroxymethylbilane pre-uroporphyrinogen in several discrete steps. This is Porphobilinogen deaminase from Xanthomonas oryzae pv. oryzae (strain MAFF 311018).